Reading from the N-terminus, the 627-residue chain is DNA-directed RNA polymerase subunit gamma (627 aa).

Residues cysteine 70, cysteine 72, cysteine 85, and cysteine 88 each coordinate Zn(2+). Residues aspartate 468, aspartate 470, and aspartate 472 each coordinate Mg(2+).

The protein belongs to the RNA polymerase beta' chain family. RpoC1 subfamily. As to quaternary structure, in cyanobacteria the RNAP catalytic core is composed of 2 alpha, 1 beta, 1 beta', 1 gamma and 1 omega subunit. When a sigma factor is associated with the core the holoenzyme is formed, which can initiate transcription. Mg(2+) serves as cofactor. The cofactor is Zn(2+).

The enzyme catalyses RNA(n) + a ribonucleoside 5'-triphosphate = RNA(n+1) + diphosphate. Functionally, DNA-dependent RNA polymerase catalyzes the transcription of DNA into RNA using the four ribonucleoside triphosphates as substrates. The sequence is that of DNA-directed RNA polymerase subunit gamma from Synechococcus sp. (strain JA-2-3B'a(2-13)) (Cyanobacteria bacterium Yellowstone B-Prime).